The primary structure comprises 175 residues: Ribonuclease M5 (175 aa).

Positions 3–83 constitute a Toprim domain; it reads NEIIIVEGKS…DVDVFNAFVS (81 aa). Mg(2+)-binding residues include E9, D57, and D59.

The protein belongs to the ribonuclease M5 family. The cofactor is Mg(2+).

The protein localises to the cytoplasm. It carries out the reaction Endonucleolytic cleavage of RNA, removing 21 and 42 nucleotides, respectively, from the 5'- and 3'-termini of a 5S-rRNA precursor.. Required for correct processing of both the 5' and 3' ends of 5S rRNA precursor. Cleaves both sides of a double-stranded region yielding mature 5S rRNA in one step. In Mesoplasma florum (strain ATCC 33453 / NBRC 100688 / NCTC 11704 / L1) (Acholeplasma florum), this protein is Ribonuclease M5.